Reading from the N-terminus, the 168-residue chain is Pathogenesis-related protein 1B (168 aa).

The signal sequence occupies residues 1–30 (MGFFLFSQMPSFFLVSTLLLFLIISHSSHA). An SCP domain is found at 38–156 (LDAHNTARAD…NGGYVVSCNY (119 aa)).

The protein belongs to the CRISP family. Three disulfide bonds are present.

It localises to the vacuole. In terms of biological role, probably involved in the defense reaction of plants against pathogens. The chain is Pathogenesis-related protein 1B from Nicotiana tabacum (Common tobacco).